The sequence spans 315 residues: Polyprenyl transferase mpaA (315 aa).

8 helical membrane-spanning segments follow: residues 40-60 (IEFI…LCGA), 84-103 (LASG…GQYF), 118-135 (IWSL…YPYL), 143-163 (VFVY…ITGW), 174-194 (GDII…CVYF), 224-244 (LFLA…ISTI), 248-268 (WLWV…IAQF), and 279-299 (IHWD…VEVG).

This sequence belongs to the UbiA prenyltransferase family. It depends on Mg(2+) as a cofactor.

It is found in the golgi apparatus membrane. It carries out the reaction 5,7-dihydroxy-4-methylphthalide + (2E,6E)-farnesyl diphosphate = 4-farnesyl-3,5-dihydroxy-6-methylphthalide + diphosphate. It participates in secondary metabolite biosynthesis; terpenoid biosynthesis. Its function is as follows. Polyprenyl transferase; part of the gene cluster that mediates the biosynthesis of mycophenolic acid (MPA), the first isolated antibiotic natural product in the world obtained from a culture of Penicillium brevicompactum in 1893. MpaA is a Golgi apparatus-associated enzyme that catalyzes the prenylation of 5,7-dihydroxy-4,6-dimethylphthalide (DHMP) to yield farnesyl-DHMP (FDHMP). The first step of the pathway is the synthesis of 5-methylorsellinic acid (5MOA) by the cytosolic polyketide synthase mpaC. 5MOA is then converted to the phthalide compound 5,7-dihydroxy-4,6-dimethylphthalide (DHMP) by the endoplasmic reticulum-bound cytochrome P450 monooxygenase mpaDE. MpaDE first catalyzes hydroxylation of 5-MOA to 4,6-dihydroxy-2-(hydroxymethyl)-3-methylbenzoic acid (DHMB). MpaDE then acts as a lactone synthase that catalyzes the ring closure to convert DHMB into DHMP. The next step is the prenylation of DHMP by the Golgi apparatus-associated prenyltransferase mpaA to yield farnesyl-DHMP (FDHMP). The ER-bound oxygenase mpaB then mediates the oxidative cleavage the C19-C20 double bond in FDHMP to yield FDHMP-3C via a mycophenolic aldehyde intermediate. The O-methyltransferase mpaG catalyzes the methylation of FDHMP-3C to yield MFDHMP-3C. After the cytosolic methylation of FDHMP-3C, MFDHMP-3C enters into peroxisomes probably via free diffusion due to its low molecular weight. Upon a peroxisomal CoA ligation reaction, catalyzed by a beta-oxidation component enzyme acyl-CoA ligase ACL891, MFDHMP-3C-CoA would then be restricted to peroxisomes for the following beta-oxidation pathway steps. The peroxisomal beta-oxidation machinery than converts MFDHMP-3C-CoA into MPA_CoA, via a beta-oxidation chain-shortening process. Finally mpaH acts as a peroxisomal acyl-CoA hydrolase with high substrate specificity toward MPA-CoA to release the final product MPA. The sequence is that of Polyprenyl transferase mpaA from Penicillium brevicompactum.